A 117-amino-acid chain; its full sequence is MTRAKSGKISKNRHKKILKFAKGYRGRANSCFRVAIEKVEKALQYAYRDRRNRKRDFRGLWIQRINAAVREHGLVYSQFMGALKKTEIDIDRKVLAELAVNNSDGFVSIVEKAKAHI.

It belongs to the bacterial ribosomal protein bL20 family.

In terms of biological role, binds directly to 23S ribosomal RNA and is necessary for the in vitro assembly process of the 50S ribosomal subunit. It is not involved in the protein synthesizing functions of that subunit. This chain is Large ribosomal subunit protein bL20, found in Rickettsia peacockii (strain Rustic).